The sequence spans 601 residues: tRNA 5-methylaminomethyl-2-thiouridine biosynthesis bifunctional protein MnmC (601 aa).

The tract at residues 1–237 is tRNA (mnm(5)s(2)U34)-methyltransferase; it reads MSDPTASPLI…KKQRLEAVAP (237 aa). Residues 252–601 are FAD-dependent cmnm(5)s(2)U34 oxidoreductase; it reads IGGGIAGAAM…FSSRVATGAV (350 aa).

The protein in the N-terminal section; belongs to the methyltransferase superfamily. tRNA (mnm(5)s(2)U34)-methyltransferase family. This sequence in the C-terminal section; belongs to the DAO family. It depends on FAD as a cofactor.

The protein resides in the cytoplasm. It catalyses the reaction 5-aminomethyl-2-thiouridine(34) in tRNA + S-adenosyl-L-methionine = 5-methylaminomethyl-2-thiouridine(34) in tRNA + S-adenosyl-L-homocysteine + H(+). Its function is as follows. Catalyzes the last two steps in the biosynthesis of 5-methylaminomethyl-2-thiouridine (mnm(5)s(2)U) at the wobble position (U34) in tRNA. Catalyzes the FAD-dependent demodification of cmnm(5)s(2)U34 to nm(5)s(2)U34, followed by the transfer of a methyl group from S-adenosyl-L-methionine to nm(5)s(2)U34, to form mnm(5)s(2)U34. This chain is tRNA 5-methylaminomethyl-2-thiouridine biosynthesis bifunctional protein MnmC, found in Caulobacter sp. (strain K31).